The following is an 82-amino-acid chain: Small ribosomal subunit protein bS16 (82 aa).

This sequence belongs to the bacterial ribosomal protein bS16 family.

The chain is Small ribosomal subunit protein bS16 from Erwinia tasmaniensis (strain DSM 17950 / CFBP 7177 / CIP 109463 / NCPPB 4357 / Et1/99).